Here is a 613-residue protein sequence, read N- to C-terminus: Proline--tRNA ligase (613 aa).

It belongs to the class-II aminoacyl-tRNA synthetase family. ProS type 1 subfamily. Homodimer.

The protein localises to the cytoplasm. The enzyme catalyses tRNA(Pro) + L-proline + ATP = L-prolyl-tRNA(Pro) + AMP + diphosphate. In terms of biological role, catalyzes the attachment of proline to tRNA(Pro) in a two-step reaction: proline is first activated by ATP to form Pro-AMP and then transferred to the acceptor end of tRNA(Pro). As ProRS can inadvertently accommodate and process non-cognate amino acids such as alanine and cysteine, to avoid such errors it has two additional distinct editing activities against alanine. One activity is designated as 'pretransfer' editing and involves the tRNA(Pro)-independent hydrolysis of activated Ala-AMP. The other activity is designated 'posttransfer' editing and involves deacylation of mischarged Ala-tRNA(Pro). The misacylated Cys-tRNA(Pro) is not edited by ProRS. This is Proline--tRNA ligase from Cyanothece sp. (strain PCC 7425 / ATCC 29141).